We begin with the raw amino-acid sequence, 720 residues long: Fatty acid CoA ligase Acsl3 (720 aa).

The chain crosses the membrane as a helical; Signal-anchor for type III membrane protein span at residues I21–F41. The Cytoplasmic portion of the chain corresponds to Y42 to K720. At S683 the chain carries Phosphoserine.

This sequence belongs to the ATP-dependent AMP-binding enzyme family. It depends on Mg(2+) as a cofactor.

It is found in the mitochondrion outer membrane. The protein resides in the peroxisome membrane. Its subcellular location is the microsome membrane. The protein localises to the endoplasmic reticulum membrane. The enzyme catalyses a long-chain fatty acid + ATP + CoA = a long-chain fatty acyl-CoA + AMP + diphosphate. It carries out the reaction (5Z,8Z,11Z,14Z)-eicosatetraenoate + ATP + CoA = (5Z,8Z,11Z,14Z)-eicosatetraenoyl-CoA + AMP + diphosphate. The catalysed reaction is (E)-hexadec-2-enoate + ATP + CoA = (2E)-hexadecenoyl-CoA + AMP + diphosphate. It catalyses the reaction 15-hydroxy-(5Z,8Z,11Z,13E)-eicosatetraenoate + ATP + CoA = 15-hydroxy-(5Z,8Z,11Z,13E)-eicosatetraenoyl-CoA + AMP + diphosphate. The enzyme catalyses 12-hydroxy-(5Z,8Z,10E,14Z)-eicosatetraenoate + ATP + CoA = 12-hydroxy-(5Z,8Z,10E,14Z)-eicosatetraenoyl-CoA + AMP + diphosphate. It carries out the reaction 5-hydroxy-(6E,8Z,11Z,14Z)-eicosatetraenoate + ATP + CoA = 5-hydroxy-(6E,8Z,11Z,14Z)-eicosatetraenoyl-CoA + AMP + diphosphate. The catalysed reaction is 14,15-epoxy-(5Z,8Z,11Z)-eicosatrienoate + ATP + CoA = 14,15-epoxy-(5Z,8Z,11Z)-eicosatrienoyl-CoA + AMP + diphosphate. It catalyses the reaction 11,12-epoxy-(5Z,8Z,14Z)-eicosatrienoate + ATP + CoA = 11,12-epoxy-(5Z,8Z,14Z)-eicosatrienoyl-CoA + AMP + diphosphate. The enzyme catalyses a medium-chain fatty acid + ATP + CoA = a medium-chain fatty acyl-CoA + AMP + diphosphate. It carries out the reaction hexadecanoate + ATP + CoA = hexadecanoyl-CoA + AMP + diphosphate. The catalysed reaction is tetradecanoate + ATP + CoA = tetradecanoyl-CoA + AMP + diphosphate. It catalyses the reaction dodecanoate + ATP + CoA = dodecanoyl-CoA + AMP + diphosphate. The enzyme catalyses octadecanoate + ATP + CoA = octadecanoyl-CoA + AMP + diphosphate. It carries out the reaction eicosanoate + ATP + CoA = eicosanoyl-CoA + AMP + diphosphate. The catalysed reaction is (9Z)-octadecenoate + ATP + CoA = (9Z)-octadecenoyl-CoA + AMP + diphosphate. It catalyses the reaction (9Z)-hexadecenoate + ATP + CoA = (9Z)-hexadecenoyl-CoA + AMP + diphosphate. The enzyme catalyses (9Z,12Z)-octadecadienoate + ATP + CoA = (9Z,12Z)-octadecadienoyl-CoA + AMP + diphosphate. It carries out the reaction (9Z,12Z,15Z)-octadecatrienoate + ATP + CoA = (9Z,12Z,15Z)-octadecatrienoyl-CoA + AMP + diphosphate. The catalysed reaction is (4Z,7Z,10Z,13Z,16Z,19Z)-docosahexaenoate + ATP + CoA = (4Z,7Z,10Z,13Z,16Z,19Z)-docosahexaenoyl-CoA + AMP + diphosphate. It catalyses the reaction (5Z,8Z,11Z,14Z,17Z)-eicosapentaenoate + ATP + CoA = (5Z,8Z,11Z,14Z,17Z)-eicosapentaenoyl-CoA + AMP + diphosphate. The enzyme catalyses a fatty acid + ATP + CoA = a fatty acyl-CoA + AMP + diphosphate. Acyl-CoA synthetases (ACSL) activates long-chain fatty acids for both synthesis of cellular lipids, and degradation via beta-oxidation. Required for the incorporation of fatty acids into phosphatidylcholine, the major phospholipid located on the surface of VLDL (very low density lipoproteins). Has mainly an anabolic role in energy metabolism. Mediates hepatic lipogenesis. Preferentially uses myristate, laurate, arachidonate and eicosapentaenoate as substrates. Both isoforms exhibit the same level of activity. The sequence is that of Fatty acid CoA ligase Acsl3 from Homo sapiens (Human).